Consider the following 1083-residue polypeptide: Kinesin-like protein klp-19 (1083 aa).

The Kinesin motor domain maps to 6-328; sequence SLRVVVRARP…LRYADRAKQI (323 aa). 85-92 is a binding site for ATP; that stretch reads GQTGSGKT. Positions 408 to 435 form a coiled coil; the sequence is MSALTQKNSRLEEDKAKLQSMLTDVRNT. A compositionally biased stretch (acidic residues) spans 458–471; sequence TEESTTLADDDNDE. The tract at residues 458 to 479 is disordered; it reads TEESTTLADDDNDETALGGQDD. A coiled-coil region spans residues 487–650; the sequence is LPELQAELDD…KSKLQKREND (164 aa). Positions 1044–1055 are enriched in polar residues; sequence DDSQPSPSNSTF. A disordered region spans residues 1044-1083; that stretch reads DDSQPSPSNSTFVIGAAPTSEADGVPPIKRKSRRTDLGPL.

The protein belongs to the TRAFAC class myosin-kinesin ATPase superfamily. Kinesin family. As to expression, expressed in the gonad.

It is found in the nucleus. The protein localises to the nucleoplasm. It localises to the cytoplasm. The protein resides in the cytoskeleton. Its subcellular location is the spindle. It is found in the chromosome. Functionally, required for chromosome movement and orientation on spindle poles in mitosis and meiosis. May play a role in early anterior-posterior chromosome movement in mitotic embryos. The polypeptide is Kinesin-like protein klp-19 (Caenorhabditis elegans).